The primary structure comprises 146 residues: Aspartate 1-decarboxylase (146 aa).

The Schiff-base intermediate with substrate; via pyruvic acid role is filled by serine 25. Residue serine 25 is modified to Pyruvic acid (Ser). Substrate is bound at residue threonine 57. The Proton donor role is filled by tyrosine 58. 73-75 is a binding site for substrate; the sequence is GPA.

Belongs to the PanD family. In terms of assembly, heterooctamer of four alpha and four beta subunits. The cofactor is pyruvate. Post-translationally, is synthesized initially as an inactive proenzyme, which is activated by self-cleavage at a specific serine bond to produce a beta-subunit with a hydroxyl group at its C-terminus and an alpha-subunit with a pyruvoyl group at its N-terminus.

The protein localises to the cytoplasm. The catalysed reaction is L-aspartate + H(+) = beta-alanine + CO2. Its pathway is cofactor biosynthesis; (R)-pantothenate biosynthesis; beta-alanine from L-aspartate: step 1/1. Catalyzes the pyruvoyl-dependent decarboxylation of aspartate to produce beta-alanine. The chain is Aspartate 1-decarboxylase from Salinibacter ruber (strain DSM 13855 / M31).